A 329-amino-acid polypeptide reads, in one-letter code: uncharacterized protein (329 aa).

In terms of domain architecture, Nudix hydrolase spans 27–185 (PRRASVAVII…IQIDSSRALK (159 aa)). Helical transmembrane passes span 123–143 (VITSNWGQFPLLLLSSFVFIL), 227–247 (PFLRGITHSIFVDLFIFLSPS), and 303–323 (LTLLVGFLFRLFLVYLLFLII).

It localises to the membrane. This is an uncharacterized protein from Schizosaccharomyces pombe (strain 972 / ATCC 24843) (Fission yeast).